The following is a 1374-amino-acid chain: F-actin-uncapping protein LRRC16A (1374 aa).

Met-1 is modified (N-acetylmethionine). A Phosphoserine modification is found at Ser-122. LRR repeat units lie at residues 245–269, 275–298, 304–327, 336–363, 391–418, 423–447, 485–510, 547–570, 574–597, and 658–682; these read SNRLEELVLENAGLRIDFAQKLAGA, NSGLHTINLAGNSLEDRGVSSLSI, PKGLKHLNLSKTSLSPKGVNSLCQ, ASTLTHLDLSGNALRGDDLSHMYNFLAQ, LQCLAVLNLSRSVFSHRKGKEVPPSFKQ, SLALIQINLSGTKLSPEPLKALLLG, IHNITSLDISDNGLESDLSTLIVWLS, DSPLQSLSLADSKLKAEVTIIINA, NTSLTKVDISGNGMGDMGAKMLAK, and LQKIENYLLRNHETRKYLQEQAYRL. Positions 714–738 form a coiled coil; sequence GDAIQEDLKAAERLMRDAKNSKTLL. Thr-920 is subject to Phosphothreonine. 2 disordered regions span residues 961–982 and 1040–1374; these read PFPSVRQEKRSSGLISELPSEE and KMDC…FIFV. The LRR 11 repeat unit spans residues 962 to 985; it reads FPSVRQEKRSSGLISELPSEEGRR. The segment at 962–1084 is inhibits capping activity of CP; that stretch reads FPSVRQEKRS…LIKSRSRSER (123 aa). Residue Ser-972 is modified to Phosphoserine. Residues 1040 to 1064 show a composition bias toward basic and acidic residues; sequence KMDCKRSSSRSSDAHELGEGDEKKK. The interval 1058 to 1092 is necessary for localization at the cell membrane; sequence EGDEKKKRDSRRSGFLNLIKSRSRSERPPTVLMTE. The residue at position 1096 (Ser-1096) is a Phosphoserine. Basic and acidic residues-rich tracts occupy residues 1108–1132 and 1141–1150; these read TTRKEIKAAEHNGAPDRTEEIKTPE and EAGRAERSDS. A compositionally biased stretch (polar residues) spans 1191–1204; it reads VISQDPSSPVSCNT. The residue at position 1229 (Thr-1229) is a Phosphothreonine. Over residues 1232 to 1244 the composition is skewed to basic and acidic residues; the sequence is KNAKAEPRVDGGC. The segment covering 1245–1263 has biased composition (low complexity); that stretch reads RSRSSSSMPTSPKPLLQSP. Phosphoserine is present on residues Ser-1281, Ser-1289, Ser-1291, Ser-1295, Ser-1319, Ser-1328, and Ser-1335. Low complexity predominate over residues 1317–1330; the sequence is QNSSQSSPRSFSQE. The span at 1343-1356 shows a compositional bias: basic and acidic residues; that stretch reads QEQKQRSSGKDGHQ. Ser-1363 is modified (phosphoserine).

Belongs to the CARMIL family. As to quaternary structure, homodimer. Interacts (via C-terminus) with heterodimeric capping protein (CP); this interaction uncaps barbed ends capped by CP, enhances barbed-end actin polymerization and promotes lamellipodial formation and cell migration. Interacts with MYO1E. Interacts with TRIO.

It localises to the cytoplasm. The protein resides in the cytoskeleton. The protein localises to the cell membrane. Its subcellular location is the cell projection. It is found in the lamellipodium. Cell membrane-cytoskeleton-associated protein that plays a role in the regulation of actin polymerization at the barbed end of actin filaments. Prevents F-actin heterodimeric capping protein (CP) activity at the leading edges of migrating cells, and hence generates uncapped barbed ends and enhances actin polymerization, however, seems unable to nucleate filaments. Plays a role in lamellipodial protrusion formations and cell migration. In Mus musculus (Mouse), this protein is F-actin-uncapping protein LRRC16A.